Here is a 121-residue protein sequence, read N- to C-terminus: Large ribosomal subunit protein bL20 (121 aa).

The protein belongs to the bacterial ribosomal protein bL20 family.

Its function is as follows. Binds directly to 23S ribosomal RNA and is necessary for the in vitro assembly process of the 50S ribosomal subunit. It is not involved in the protein synthesizing functions of that subunit. The polypeptide is Large ribosomal subunit protein bL20 (Dinoroseobacter shibae (strain DSM 16493 / NCIMB 14021 / DFL 12)).